Reading from the N-terminus, the 496-residue chain is MDDVPAPTPAPAPPAAAAPRVPFHCSECGKSFRYRSDLRRHFARHTALKPHACPRCGKGFKHSFNLANHLRSHTGERPYRCSACPKGFRDSTGLLHHQVVHTGEKPYCCLVCELRFSSRSSLGRHLKRQHRGVLPSPLQPGPGLPALSAPCSVCCNVGPCSVCGGSGAGGGEGPEGAGAGLGSWGLAEAAAAAAASLPPFACGACARRFDHGRELAAHWAAHTDVKPFKCPRCERDFNAPALLERHKLTHDLQGPGAPPAQAWAAGPGAGPETAGEGTAAEAGDAPLASDRRLLLGPAGGGVPKLGGLLPEGGGEAPAPAAAAEPSEDTLYQCDCGTFFASAAALASHLEAHSGPATYGCGHCGALYAALAALEEHRRVSHGEGGGEEAATAAREREPASGEPPSGSGRGKKIFGCSECEKLFRSPRDLERHVLVHTGEKPFPCLECGKFFRHECYLKRHRLLHGTERPFPCHICGKGFITLSNLSRHLKLHRGMD.

Position 1 is an N-acetylmethionine (M1). 6 consecutive C2H2-type zinc fingers follow at residues 23-45, 51-73, 79-101, 107-130, 200-222, and 228-250; these read FHCS…FARH, HACP…LRSH, YRCS…QVVH, YCCL…KRQH, FACG…WAAH, and FKCP…KLTH. Residues 250–280 are disordered; the sequence is HDLQGPGAPPAQAWAAGPGAGPETAGEGTAA. Over residues 259–280 the composition is skewed to low complexity; it reads PAQAWAAGPGAGPETAGEGTAA. 5 consecutive C2H2-type zinc fingers follow at residues 331–352, 358–381, 414–436, 442–464, and 470–492; these read YQCD…LEAH, YGCG…RVSH, FGCS…VLVH, FPCL…RLLH, and FPCH…LKLH. A disordered region spans residues 378 to 412; it reads RVSHGEGGGEEAATAAREREPASGEPPSGSGRGKK.

In terms of assembly, interacts with FLT3 cytoplasmic catalytic domain, following receptor stimulation, in a kinase-independent manner. Does not interact with other structurally related receptor tyrosine kinases, including KIT, CSF1R and PDGFR. Interacts with NRL. In terms of tissue distribution, widely expressed.

It localises to the cytoplasm. It is found in the nucleus. Functionally, may be a transcriptional repressor of NRL function in photoreceptors. Does not repress CRX-mediated transactivation. The polypeptide is Flt3-interacting zinc finger protein 1 (FIZ1) (Homo sapiens (Human)).